The following is a 475-amino-acid chain: Ribulose bisphosphate carboxylase large chain (475 aa).

Positions Met1 to Ser2 are excised as a propeptide. N-acetylproline is present on Pro3. N6,N6,N6-trimethyllysine is present on Lys14. Asn123 and Thr173 together coordinate substrate. The active-site Proton acceptor is the Lys175. Lys177 provides a ligand contact to substrate. The Mg(2+) site is built by Lys201, Asp203, and Glu204. At Lys201 the chain carries N6-carboxylysine. The active-site Proton acceptor is His294. Arg295, His327, and Ser379 together coordinate substrate.

The protein belongs to the RuBisCO large chain family. Type I subfamily. In terms of assembly, heterohexadecamer of 8 large chains and 8 small chains; disulfide-linked. The disulfide link is formed within the large subunit homodimers. It depends on Mg(2+) as a cofactor. In terms of processing, the disulfide bond which can form in the large chain dimeric partners within the hexadecamer appears to be associated with oxidative stress and protein turnover.

It is found in the plastid. Its subcellular location is the chloroplast. It carries out the reaction 2 (2R)-3-phosphoglycerate + 2 H(+) = D-ribulose 1,5-bisphosphate + CO2 + H2O. It catalyses the reaction D-ribulose 1,5-bisphosphate + O2 = 2-phosphoglycolate + (2R)-3-phosphoglycerate + 2 H(+). Functionally, ruBisCO catalyzes two reactions: the carboxylation of D-ribulose 1,5-bisphosphate, the primary event in carbon dioxide fixation, as well as the oxidative fragmentation of the pentose substrate in the photorespiration process. Both reactions occur simultaneously and in competition at the same active site. In Oenothera argillicola (Appalachian evening primrose), this protein is Ribulose bisphosphate carboxylase large chain.